The primary structure comprises 390 residues: Elongation factor Ts, mitochondrial (390 aa).

Belongs to the EF-Ts family.

Its subcellular location is the mitochondrion. Associates with the EF-Tu.GDP complex and induces the exchange of GDP to GTP. It remains bound to the aminoacyl-tRNA.EF-Tu.GTP complex up to the GTP hydrolysis stage on the ribosome. This Plasmodium vivax (strain Salvador I) protein is Elongation factor Ts, mitochondrial.